A 224-amino-acid polypeptide reads, in one-letter code: Germin-like protein 8-10 (224 aa).

Positions 1–22 (MASPSICLLAALLALVSWQAIA) are cleaved as a signal peptide. Cysteine 32 and cysteine 47 are oxidised to a cystine. A Cupin type-1 domain is found at 62 to 212 (AMLDTPRKTN…AFQVEKGTID (151 aa)). Asparagine 76 carries an N-linked (GlcNAc...) asparagine glycan. Mn(2+) is bound by residues histidine 109, histidine 111, and glutamate 116. Asparagine 135 carries N-linked (GlcNAc...) asparagine glycosylation. Position 157 (histidine 157) interacts with Mn(2+).

Belongs to the germin family. As to quaternary structure, oligomer (believed to be a pentamer but probably hexamer).

It is found in the secreted. The protein resides in the extracellular space. The protein localises to the apoplast. Functionally, plays a role in broad-spectrum disease resistance. Probably has no oxalate oxidase activity even if the active site is conserved. This chain is Germin-like protein 8-10 (GLP2), found in Oryza sativa subsp. japonica (Rice).